We begin with the raw amino-acid sequence, 361 residues long: Chorismate synthase (361 aa).

Residues arginine 48 and arginine 54 each contribute to the NADP(+) site. FMN-binding positions include 125–127, 238–239, glycine 278, 293–297, and arginine 319; these read RSS, NA, and KPTSS.

Belongs to the chorismate synthase family. In terms of assembly, homotetramer. FMNH2 serves as cofactor.

The enzyme catalyses 5-O-(1-carboxyvinyl)-3-phosphoshikimate = chorismate + phosphate. It participates in metabolic intermediate biosynthesis; chorismate biosynthesis; chorismate from D-erythrose 4-phosphate and phosphoenolpyruvate: step 7/7. Its function is as follows. Catalyzes the anti-1,4-elimination of the C-3 phosphate and the C-6 proR hydrogen from 5-enolpyruvylshikimate-3-phosphate (EPSP) to yield chorismate, which is the branch point compound that serves as the starting substrate for the three terminal pathways of aromatic amino acid biosynthesis. This reaction introduces a second double bond into the aromatic ring system. In Salmonella choleraesuis (strain SC-B67), this protein is Chorismate synthase.